The chain runs to 296 residues: MSDVVKTVIGQRLDLYKLLELNYKDYKGNDDAATTHSLKKQYRKLSLRYHPDKNPGPEYIDRFHLLNLAITVLADPAKKAEYDQWVAQYLYPDNGLSEAEQTRREALVQKLNASERKVREDNQGGNVADIGKIQNYGEKLRRMAHFGLGFGDWRNLDEHISRATTNTIEDSTTDKEVCTLRAVFDFQSIENISDPNNLRRYMNEVFPEYMYDIDEIRYSSNNVYDGEEDIVVYIVLKDPIKTGRLYHQIKRNPPDAFVEIEPYISPKLFESFSKEIPLNDHVKNLLRGVPEVIDLD.

The J domain maps to 14-86 (DLYKLLELNY…AKKAEYDQWV (73 aa)).

It belongs to the DnaJ family. As to quaternary structure, associated with the spliceosome.

The protein resides in the cytoplasm. The protein localises to the nucleus. Its function is as follows. Involved in pre-mRNA splicing. May be involved in endoplasmic reticulum-associated protein degradation (ERAD) and required for growth at low and high temperatures. This Candida glabrata (strain ATCC 2001 / BCRC 20586 / JCM 3761 / NBRC 0622 / NRRL Y-65 / CBS 138) (Yeast) protein is Pre-mRNA-splicing factor CWC23 (CWC23).